A 912-amino-acid polypeptide reads, in one-letter code: MINSLLTRVFGSRNERQLRQLNRLVTQINALEPTIEKLSDAELQAKTPEFKQRLAAGESLDKILPEAFAVCREASRRVLGMRHYDVQLIGGMVLHLGKIAEMRTGEGKTLVATLPVYLNALQGEGVHVVTVNDYLARRDAAQMGKLYNWLGLSVGVVYPGMPHSDKREAYGADITYGTNNEFGFDYLRDNMALSRADRYQRNLHYAIVDEVDSILIDEARTPLIISGPADESPELYIRVNRIVPQLTRQESEEGEGDFWIDEKGKQVHLSEAGMGHAEELLLQAGILENAEDGLYAAQNLSVVHHLNAALRAHAIYQRDVDYIVRDGEVVIVDEFTGRTLSGRRWSDGLHQAVEAKEGVPVQRENQTLASITFQNLFRMYKKLSGMTGTADTEAYEFQSIYGLEVVVIPTNRPTVRKDHPDQVFLNRKGKFNAVLADIEDCAKRGQPVLVGTTSIETSEMLSEHLRKAGVKHEVLNAKQHEREATIVANAGQPGAVTIATNMAGRGTDIVLGGSLESEYHALGEDASEDARFKIKTEWQRRHDAVKAAGGLHIIGTERHESRRIDNQLRGRAGRQGDPGSSRFYLSLEDNLMRIFASDWVQKAMRMMGMKEDDVIEDRLVSRQIEKAQRKVEAHNFDIRKNLLDFDDVNNDQRKVIYAQRDELLDAESVKDNVDGIRGDVIYDLVARFVPPNSVDEQWDLKGLEATLESELGMTLSLTDMVRAQEEIDAEQIAAKVQTAVDAHFAEKEAAIGADTMRALEKHVMLTVLDQGWKEHLAKMDYLRQGIYLRGYAQKQPKQEYKKEAFELFSEMLENVKREVINLLARVRIRSEEEVAELEEQERLQAQARLMASQFQHQDVGGYGAEEEVEQMQGGNAPVPVSQVTRDEPKVGRNDPCPCGSGKKYKHCHGQLS.

ATP is bound by residues Gln-87, 105–109 (GEGKT), and Asp-508. A disordered region spans residues 864-912 (AEEEVEQMQGGNAPVPVSQVTRDEPKVGRNDPCPCGSGKKYKHCHGQLS). Zn(2+) is bound by residues Cys-896, Cys-898, Cys-907, and His-908. Residues 902-912 (KKYKHCHGQLS) show a composition bias toward basic residues.

The protein belongs to the SecA family. In terms of assembly, monomer and homodimer. Part of the essential Sec protein translocation apparatus which comprises SecA, SecYEG and auxiliary proteins SecDF-YajC and YidC. Requires Zn(2+) as cofactor.

The protein resides in the cell inner membrane. Its subcellular location is the cytoplasm. The catalysed reaction is ATP + H2O + cellular proteinSide 1 = ADP + phosphate + cellular proteinSide 2.. Part of the Sec protein translocase complex. Interacts with the SecYEG preprotein conducting channel. Has a central role in coupling the hydrolysis of ATP to the transfer of proteins into and across the cell membrane, serving both as a receptor for the preprotein-SecB complex and as an ATP-driven molecular motor driving the stepwise translocation of polypeptide chains across the membrane. The chain is Protein translocase subunit SecA from Xanthomonas euvesicatoria pv. vesicatoria (strain 85-10) (Xanthomonas campestris pv. vesicatoria).